The following is a 113-amino-acid chain: U11-theraphotoxin-Hhn1f (113 aa).

Residues 1–21 form the signal peptide; sequence MNTVRVTFLLVFVLAVSLGQA. The propeptide occupies 22–74; it reads DKDENRMEMQEKTEQGKSYLDFAENLLLQKLEELEAKLLEEDSKESRNSRQKR. Positions 61–82 are disordered; it reads EEDSKESRNSRQKRCIGEGVPC. Cystine bridges form between C75–C90, C82–C95, and C89–C110.

Belongs to the neurotoxin 14 (magi-1) family. 01 (HNTX-16) subfamily. As to expression, expressed by the venom gland.

It localises to the secreted. In terms of biological role, probable ion channel inhibitor. The sequence is that of U11-theraphotoxin-Hhn1f from Cyriopagopus hainanus (Chinese bird spider).